An 82-amino-acid polypeptide reads, in one-letter code: Small ribosomal subunit protein bS18 (82 aa).

Positions 1–20 (MVDINQIPTRRPFHRRRKTC) are disordered.

Belongs to the bacterial ribosomal protein bS18 family. Part of the 30S ribosomal subunit. Forms a tight heterodimer with protein bS6.

Binds as a heterodimer with protein bS6 to the central domain of the 16S rRNA, where it helps stabilize the platform of the 30S subunit. This Brucella abortus (strain 2308) protein is Small ribosomal subunit protein bS18.